Consider the following 311-residue polypeptide: tRNA-cytidine(32) 2-sulfurtransferase (311 aa).

Residues 47–52 (SGGKDS) carry the PP-loop motif motif. [4Fe-4S] cluster is bound by residues Cys-122, Cys-125, and Cys-213.

It belongs to the TtcA family. As to quaternary structure, homodimer. The cofactor is Mg(2+). It depends on [4Fe-4S] cluster as a cofactor.

Its subcellular location is the cytoplasm. The catalysed reaction is cytidine(32) in tRNA + S-sulfanyl-L-cysteinyl-[cysteine desulfurase] + AH2 + ATP = 2-thiocytidine(32) in tRNA + L-cysteinyl-[cysteine desulfurase] + A + AMP + diphosphate + H(+). It participates in tRNA modification. Functionally, catalyzes the ATP-dependent 2-thiolation of cytidine in position 32 of tRNA, to form 2-thiocytidine (s(2)C32). The sulfur atoms are provided by the cysteine/cysteine desulfurase (IscS) system. This Escherichia coli O139:H28 (strain E24377A / ETEC) protein is tRNA-cytidine(32) 2-sulfurtransferase.